A 96-amino-acid chain; its full sequence is Small ribosomal subunit protein bS20 (96 aa).

It belongs to the bacterial ribosomal protein bS20 family.

Binds directly to 16S ribosomal RNA. This chain is Small ribosomal subunit protein bS20, found in Anaplasma marginale (strain St. Maries).